Consider the following 1248-residue polypeptide: Reverse gyrase 1 (1248 aa).

An RG N-terminal-type zinc finger spans residues 7 to 44 (IPPSIYLFSCPNCGRSISTYRLLLGSVCNICLEEDKEY). Residues C16, C19, C34, and C37 each coordinate Zn(2+). ATP-binding positions include Q92 and 109–116 (APPGLGKT). Positions 96 to 262 (IYRLLSGESF…KKYRENTQKN (167 aa)) constitute a Helicase ATP-binding domain. A DEAD box motif is present at residues 219–222 (DDVD). A topoisomerase I region spans residues 621-1248 (QKVKTVLLVV…QVYEEINEIR (628 aa)). In terms of domain architecture, Toprim spans 625–789 (TVLLVVESPN…NIRRAEFHEV (165 aa)). E631 contributes to the Mg(2+) binding site. The RG C-terminal-type; atypical zinc finger occupies 706 to 735 (IKKCENNHQFTDFFESNKCPRCMTTKVRYD). The Zn(2+) site is built by C709, H713, C724, and C727. D758 provides a ligand contact to Mg(2+). The Topo IA-type catalytic domain maps to 805-1248 (NVNLVKSQLV…QVYEEINEIR (444 aa)). Catalysis depends on Y965, which acts as the O-(5'-phospho-DNA)-tyrosine intermediate.

This sequence in the N-terminal section; belongs to the DEAD box helicase family. DDVD subfamily. It in the C-terminal section; belongs to the type IA topoisomerase family. In terms of assembly, monomer. Zn(2+) serves as cofactor. Mg(2+) is required as a cofactor. In terms of processing, the N-terminus is blocked.

It is found in the cytoplasm. It catalyses the reaction ATP + H2O = ADP + phosphate + H(+). Functionally, modifies the topological state of DNA by introducing positive supercoils in an ATP-dependent process. Increases the linking number in steps of +1. Has a DNA-stimulated ATPase activity; closed circular ssDNA stimulates ATPase much better than dsDNA although negative supercoiled, positive supercoiled and relaxed dsDNA all stimulate ATPase activity. All NTPs permit topoisomerization (relaxation) of negatively supercoiled dsDNA without nucleotide hydrolysis. It transiently cleaves a single DNA strand and remains covalently bound to the 5' DNA end. Acts via a tyrosine residue. Reverse gyrase binds and unwinds DNA independently of ATP binding and DNA cleavage. May be involved in rewinding the DNA strands in the regions of the chromosome that have opened up to allow transcription or replication, probably acts via ssDNA regions of the chromosome. This is Reverse gyrase 1 from Sulfolobus acidocaldarius (strain ATCC 33909 / DSM 639 / JCM 8929 / NBRC 15157 / NCIMB 11770).